The following is a 359-amino-acid chain: 3-dehydroquinate synthase (359 aa).

NAD(+)-binding positions include 69 to 74 (DGEAYK), 103 to 107 (GVIGD), 127 to 128 (TT), lysine 140, lysine 149, and 167 to 170 (CLKT). The Zn(2+) site is built by glutamate 182, histidine 245, and histidine 262.

It belongs to the sugar phosphate cyclases superfamily. Dehydroquinate synthase family. Requires Co(2+) as cofactor. The cofactor is Zn(2+). NAD(+) serves as cofactor.

The protein localises to the cytoplasm. It catalyses the reaction 7-phospho-2-dehydro-3-deoxy-D-arabino-heptonate = 3-dehydroquinate + phosphate. The protein operates within metabolic intermediate biosynthesis; chorismate biosynthesis; chorismate from D-erythrose 4-phosphate and phosphoenolpyruvate: step 2/7. Functionally, catalyzes the conversion of 3-deoxy-D-arabino-heptulosonate 7-phosphate (DAHP) to dehydroquinate (DHQ). The protein is 3-dehydroquinate synthase of Aeromonas salmonicida (strain A449).